We begin with the raw amino-acid sequence, 222 residues long: Putative germin-like protein 3-2 (222 aa).

A signal peptide spans 1-22 (MAKLILATFAVVFLALAATSLA). A disulfide bond links cysteine 32 and cysteine 50. N-linked (GlcNAc...) asparagine glycosylation is found at asparagine 55 and asparagine 71. The Cupin type-1 domain occupies 64-212 (DGLTNAGNTT…AFQVDGGMVE (149 aa)). Mn(2+) is bound by residues histidine 112, histidine 114, glutamate 119, and histidine 158. A glycan (N-linked (GlcNAc...) asparagine) is linked at asparagine 165.

The protein belongs to the germin family. Oligomer (believed to be a pentamer but probably hexamer).

The protein localises to the secreted. The protein resides in the extracellular space. It localises to the apoplast. In terms of biological role, may play a role in plant defense. Probably has no oxalate oxidase activity even if the active site is conserved. In Oryza sativa subsp. japonica (Rice), this protein is Putative germin-like protein 3-2.